The sequence spans 391 residues: Formate-dependent phosphoribosylglycinamide formyltransferase (391 aa).

N(1)-(5-phospho-beta-D-ribosyl)glycinamide is bound by residues 18–19 (EL) and glutamate 78. Residues arginine 110, lysine 151, 156 to 161 (SSGKGQ), 191 to 194 (EEFI), and glutamate 199 contribute to the ATP site. Residues 115–305 (ELAHEELGIR…EFELHLRAIL (191 aa)) enclose the ATP-grasp domain. The Mg(2+) site is built by glutamate 264 and glutamate 276. N(1)-(5-phospho-beta-D-ribosyl)glycinamide is bound by residues aspartate 283, lysine 353, and 360–361 (RR).

It belongs to the PurK/PurT family. As to quaternary structure, homodimer.

It catalyses the reaction N(1)-(5-phospho-beta-D-ribosyl)glycinamide + formate + ATP = N(2)-formyl-N(1)-(5-phospho-beta-D-ribosyl)glycinamide + ADP + phosphate + H(+). It functions in the pathway purine metabolism; IMP biosynthesis via de novo pathway; N(2)-formyl-N(1)-(5-phospho-D-ribosyl)glycinamide from N(1)-(5-phospho-D-ribosyl)glycinamide (formate route): step 1/1. Involved in the de novo purine biosynthesis. Catalyzes the transfer of formate to 5-phospho-ribosyl-glycinamide (GAR), producing 5-phospho-ribosyl-N-formylglycinamide (FGAR). Formate is provided by PurU via hydrolysis of 10-formyl-tetrahydrofolate. The sequence is that of Formate-dependent phosphoribosylglycinamide formyltransferase from Nostoc sp. (strain PCC 7120 / SAG 25.82 / UTEX 2576).